A 141-amino-acid chain; its full sequence is Aspartate 1-decarboxylase (141 aa).

Ser-25 (schiff-base intermediate with substrate; via pyruvic acid) is an active-site residue. Ser-25 bears the Pyruvic acid (Ser) mark. Thr-57 lines the substrate pocket. Residue Tyr-58 is the Proton donor of the active site. 73–75 (GAA) is a substrate binding site. A disordered region spans residues 121–141 (ASAPVPGSRTERSPQAVVAGG).

The protein belongs to the PanD family. In terms of assembly, heterooctamer of four alpha and four beta subunits. Requires pyruvate as cofactor. In terms of processing, is synthesized initially as an inactive proenzyme, which is activated by self-cleavage at a specific serine bond to produce a beta-subunit with a hydroxyl group at its C-terminus and an alpha-subunit with a pyruvoyl group at its N-terminus.

Its subcellular location is the cytoplasm. The catalysed reaction is L-aspartate + H(+) = beta-alanine + CO2. The protein operates within cofactor biosynthesis; (R)-pantothenate biosynthesis; beta-alanine from L-aspartate: step 1/1. In terms of biological role, catalyzes the pyruvoyl-dependent decarboxylation of aspartate to produce beta-alanine. The protein is Aspartate 1-decarboxylase of Streptomyces griseus subsp. griseus (strain JCM 4626 / CBS 651.72 / NBRC 13350 / KCC S-0626 / ISP 5235).